The sequence spans 787 residues: GPI ethanolamine phosphate transferase 2 (787 aa).

N33, N185, and N397 each carry an N-linked (GlcNAc...) asparagine glycan. 3 helical membrane-spanning segments follow: residues 400–420, 426–446, and 455–475; these read FLTY…VWNF, YIEH…SSFI, and WITI…LVVL. N-linked (GlcNAc...) asparagine glycosylation is present at N485. The next 2 membrane-spanning stretches (helical) occupy residues 504 to 524 and 536 to 556; these read HTSV…FPFL and LLSV…FAIV. N581 is a glycosylation site (N-linked (GlcNAc...) asparagine). Residues 591–611 form a helical membrane-spanning segment; the sequence is LVPIARIFFQICGVSIIILLF. An N-linked (GlcNAc...) asparagine glycan is attached at N617. The chain crosses the membrane as a helical span at residues 629–651; the sequence is VIKFVLLLQTSSANIPLFLIFEI. N669 carries N-linked (GlcNAc...) asparagine glycosylation. 4 helical membrane-spanning segments follow: residues 671–693, 699–719, 740–760, and 767–787; these read TFFQ…YNGV, IYVV…YWAL, GTCL…WSVF, and YAAW…LGVL.

The protein belongs to the PIGG/PIGN/PIGO family. PIGG subfamily.

It is found in the endoplasmic reticulum membrane. The protein operates within glycolipid biosynthesis; glycosylphosphatidylinositol-anchor biosynthesis. Ethanolamine phosphate transferase involved in glycosylphosphatidylinositol-anchor biosynthesis. Transfers ethanolamine phosphate to the GPI second mannose. The sequence is that of GPI ethanolamine phosphate transferase 2 (LAS21) from Kluyveromyces lactis (strain ATCC 8585 / CBS 2359 / DSM 70799 / NBRC 1267 / NRRL Y-1140 / WM37) (Yeast).